The primary structure comprises 334 residues: GTPase Obg (334 aa).

Residues 1 to 159 (MRFVDEVVIK…KEVRLELNLL (159 aa)) form the Obg domain. An OBG-type G domain is found at 160 to 331 (ADVALLGLPN…LAKKLNEFLQ (172 aa)). Residues 166-173 (GLPNAGKS), 191-195 (FTTMY), 212-215 (DIPG), 282-285 (NKID), and 312-314 (SAA) contribute to the GTP site. Residues Ser173 and Thr193 each coordinate Mg(2+).

This sequence belongs to the TRAFAC class OBG-HflX-like GTPase superfamily. OBG GTPase family. As to quaternary structure, monomer. It depends on Mg(2+) as a cofactor.

The protein resides in the cytoplasm. Functionally, an essential GTPase which binds GTP, GDP and possibly (p)ppGpp with moderate affinity, with high nucleotide exchange rates and a fairly low GTP hydrolysis rate. Plays a role in control of the cell cycle, stress response, ribosome biogenesis and in those bacteria that undergo differentiation, in morphogenesis control. This Francisella tularensis subsp. tularensis (strain WY96-3418) protein is GTPase Obg.